The primary structure comprises 974 residues: Coiled-coil domain-containing protein 146 (974 aa).

The disordered stretch occupies residues M1–S44. Acidic residues predominate over residues E10–E21. S12 carries the post-translational modification Phosphoserine. Coiled-coil stretches lie at residues V105 to E160, K195 to N340, L421 to L474, K512 to G660, Q687 to I712, and L767 to M848.

In terms of assembly, interacts with CCDC38 and CCDC42. Interacts with intraflagellar transport proteins IFT20 and IFT88.

The protein localises to the cytoplasm. Its subcellular location is the cytoskeleton. The protein resides in the microtubule organizing center. It localises to the centrosome. It is found in the centriole. The protein localises to the cell projection. Its subcellular location is the cilium. The protein resides in the flagellum. It localises to the flagellum axoneme. It is found in the cilium basal body. The protein localises to the midbody. Essential for sperm flagellum biogenesis and male fertility. This chain is Coiled-coil domain-containing protein 146 (Ccdc146), found in Rattus norvegicus (Rat).